We begin with the raw amino-acid sequence, 480 residues long: GTPase Der (480 aa).

EngA-type G domains are found at residues 5 to 170 (PVVA…PSQE) and 178 to 351 (LKLA…QSSM). Residues 11–18 (GRPNVGKS), 58–62 (DTGGI), 123–126 (NKVD), 184–191 (GRPNVGKS), 231–235 (DTAGV), and 296–299 (NKWD) each bind GTP. The KH-like domain occupies 352-436 (FEVSTNRLTQ…PLNVVFKLNE (85 aa)). Positions 438-454 (PYANKSDTPTKAKTQQL) are enriched in polar residues. Positions 438–480 (PYANKSDTPTKAKTQQLRQRERNRAQKFTTKDKPRFTNKDKKR) are disordered. A compositionally biased stretch (basic and acidic residues) spans 455-480 (RQRERNRAQKFTTKDKPRFTNKDKKR).

It belongs to the TRAFAC class TrmE-Era-EngA-EngB-Septin-like GTPase superfamily. EngA (Der) GTPase family. In terms of assembly, associates with the 50S ribosomal subunit.

Functionally, GTPase that plays an essential role in the late steps of ribosome biogenesis. The protein is GTPase Der of Psychrobacter cryohalolentis (strain ATCC BAA-1226 / DSM 17306 / VKM B-2378 / K5).